Reading from the N-terminus, the 230-residue chain is dITP/XTP pyrophosphatase (230 aa).

A substrate-binding site is contributed by 7–12 (STNPGK). Mg(2+)-binding residues include glutamate 41 and aspartate 70. The Proton acceptor role is filled by aspartate 70. Substrate is bound by residues serine 71, 181–184 (FGYD), lysine 205, and 210–211 (HR).

This sequence belongs to the HAM1 NTPase family. Homodimer. It depends on Mg(2+) as a cofactor.

It catalyses the reaction XTP + H2O = XMP + diphosphate + H(+). It carries out the reaction dITP + H2O = dIMP + diphosphate + H(+). The catalysed reaction is ITP + H2O = IMP + diphosphate + H(+). Pyrophosphatase that catalyzes the hydrolysis of nucleoside triphosphates to their monophosphate derivatives, with a high preference for the non-canonical purine nucleotides XTP (xanthosine triphosphate), dITP (deoxyinosine triphosphate) and ITP. Seems to function as a house-cleaning enzyme that removes non-canonical purine nucleotides from the nucleotide pool, thus preventing their incorporation into DNA/RNA and avoiding chromosomal lesions. The polypeptide is dITP/XTP pyrophosphatase (Anaeromyxobacter sp. (strain Fw109-5)).